Reading from the N-terminus, the 120-residue chain is Large ribosomal subunit protein eL34 (120 aa).

Belongs to the eukaryotic ribosomal protein eL34 family.

In Nicotiana tabacum (Common tobacco), this protein is Large ribosomal subunit protein eL34 (RPL34).